The chain runs to 399 residues: 1-deoxy-D-xylulose 5-phosphate reductoisomerase (399 aa).

NADPH is bound by residues T13, G14, S15, I16, and N127. A 1-deoxy-D-xylulose 5-phosphate-binding site is contributed by K128. Residue E129 coordinates NADPH. A Mn(2+)-binding site is contributed by D153. 1-deoxy-D-xylulose 5-phosphate is bound by residues S154, E155, S187, and H210. A Mn(2+)-binding site is contributed by E155. G216 serves as a coordination point for NADPH. 1-deoxy-D-xylulose 5-phosphate-binding residues include S223, N228, K229, and E232. E232 contacts Mn(2+).

This sequence belongs to the DXR family. Mg(2+) is required as a cofactor. The cofactor is Mn(2+).

It catalyses the reaction 2-C-methyl-D-erythritol 4-phosphate + NADP(+) = 1-deoxy-D-xylulose 5-phosphate + NADPH + H(+). It participates in isoprenoid biosynthesis; isopentenyl diphosphate biosynthesis via DXP pathway; isopentenyl diphosphate from 1-deoxy-D-xylulose 5-phosphate: step 1/6. Functionally, catalyzes the NADPH-dependent rearrangement and reduction of 1-deoxy-D-xylulose-5-phosphate (DXP) to 2-C-methyl-D-erythritol 4-phosphate (MEP). The chain is 1-deoxy-D-xylulose 5-phosphate reductoisomerase from Bordetella avium (strain 197N).